The primary structure comprises 353 residues: Paraneoplastic antigen Ma1 homolog (353 aa).

This sequence belongs to the PNMA family.

Its subcellular location is the nucleus. It is found in the nucleolus. The sequence is that of Paraneoplastic antigen Ma1 homolog (PNMA1) from Bos taurus (Bovine).